Reading from the N-terminus, the 258-residue chain is Granzyme M (258 aa).

Residues 21-250 (IIGGREAVPH…YSSWIRKVIG (230 aa)) form the Peptidase S1 domain. A disulfide bond links C46 and C62. Active-site charge relay system residues include H61 and D107. The tract at residues 122–141 (NVKPLALPRKPRDKPAEGSR) is disordered. Cystine bridges form between C142/C210, C173/C189, and C200/C226. A glycan (N-linked (GlcNAc...) asparagine) is linked at N174. Residue S204 is the Charge relay system of the active site. A glycan (N-linked (GlcNAc...) asparagine) is linked at N225.

The protein belongs to the peptidase S1 family. Granzyme subfamily.

Its subcellular location is the secreted. The protein resides in the cytoplasmic granule. Cleaves peptide substrates after methionine, leucine, and norleucine. Physiological substrates include EZR, alpha-tubulins and the apoptosis inhibitor BIRC5/Survivin. Promotes caspase activation and subsequent apoptosis of target cells. The sequence is that of Granzyme M (Gzmm) from Rattus norvegicus (Rat).